Here is a 201-residue protein sequence, read N- to C-terminus: ATP-dependent Clp protease proteolytic subunit (201 aa).

Serine 101 acts as the Nucleophile in catalysis. Residue histidine 126 is part of the active site.

It belongs to the peptidase S14 family. In terms of assembly, component of the chloroplastic Clp protease core complex.

The protein resides in the plastid. Its subcellular location is the chloroplast stroma. The enzyme catalyses Hydrolysis of proteins to small peptides in the presence of ATP and magnesium. alpha-casein is the usual test substrate. In the absence of ATP, only oligopeptides shorter than five residues are hydrolyzed (such as succinyl-Leu-Tyr-|-NHMec, and Leu-Tyr-Leu-|-Tyr-Trp, in which cleavage of the -Tyr-|-Leu- and -Tyr-|-Trp bonds also occurs).. In terms of biological role, cleaves peptides in various proteins in a process that requires ATP hydrolysis. Has a chymotrypsin-like activity. Plays a major role in the degradation of misfolded proteins. This Chaetosphaeridium globosum (Charophycean green alga) protein is ATP-dependent Clp protease proteolytic subunit.